A 616-amino-acid chain; its full sequence is Dihydroxy-acid dehydratase (616 aa).

Asp-81 contributes to the Mg(2+) binding site. Cys-122 contacts [2Fe-2S] cluster. Residues Asp-123 and Lys-124 each contribute to the Mg(2+) site. An N6-carboxylysine modification is found at Lys-124. Residue Cys-195 coordinates [2Fe-2S] cluster. Glu-491 serves as a coordination point for Mg(2+). The active-site Proton acceptor is Ser-517.

It belongs to the IlvD/Edd family. As to quaternary structure, homodimer. Requires [2Fe-2S] cluster as cofactor. It depends on Mg(2+) as a cofactor.

It carries out the reaction (2R)-2,3-dihydroxy-3-methylbutanoate = 3-methyl-2-oxobutanoate + H2O. The enzyme catalyses (2R,3R)-2,3-dihydroxy-3-methylpentanoate = (S)-3-methyl-2-oxopentanoate + H2O. It functions in the pathway amino-acid biosynthesis; L-isoleucine biosynthesis; L-isoleucine from 2-oxobutanoate: step 3/4. The protein operates within amino-acid biosynthesis; L-valine biosynthesis; L-valine from pyruvate: step 3/4. Its function is as follows. Functions in the biosynthesis of branched-chain amino acids. Catalyzes the dehydration of (2R,3R)-2,3-dihydroxy-3-methylpentanoate (2,3-dihydroxy-3-methylvalerate) into 2-oxo-3-methylpentanoate (2-oxo-3-methylvalerate) and of (2R)-2,3-dihydroxy-3-methylbutanoate (2,3-dihydroxyisovalerate) into 2-oxo-3-methylbutanoate (2-oxoisovalerate), the penultimate precursor to L-isoleucine and L-valine, respectively. This is Dihydroxy-acid dehydratase from Shewanella woodyi (strain ATCC 51908 / MS32).